The sequence spans 147 residues: DNA polymerase epsilon subunit 3 (147 aa).

Ala-2 is modified (N-acetylalanine). Thr-83 bears the Phosphothreonine mark. Residues 85 to 146 are a coiled coil; it reads LKEALEAYRR…EEQNEEEEVD (62 aa). Residues 93-124 are compositionally biased toward basic and acidic residues; it reads RREQKGKKEASEQKKKDKDKKTDSEEQDKSRD. The tract at residues 93-147 is disordered; sequence RREQKGKKEASEQKKKDKDKKTDSEEQDKSRDEDNDEDEERLEEEEQNEEEEVDN. Ser-122 carries the phosphoserine modification. Residues 125–147 show a composition bias toward acidic residues; the sequence is EDNDEDEERLEEEEQNEEEEVDN.

As to quaternary structure, component of the DNA polymerase epsilon complex consisting of four subunits: the catalytic subunit POLE and the accessory subunits POLE2, POLE3 and POLE4. Interaction with POLE4 is a prerequisite for further binding with POLE and POLE2. Heterodimer with CHRAC1; binds to DNA. Component of the CHRAC ISWI chromatin remodeling complex at least composed of SMARCA5/SNF2H, BAZ1A/ACF1, CHRAC1 and POLE3; the complex preferentially binds DNA through the CHRAC1-POLE3 heterodimer and possesses ATP-dependent nucleosome-remodeling activity. Within the complex, the heterodimer with CHRAC1 interacts with SMARCA5/SNF2H; the interaction is direct and enhances nucleosome sliding activity by the SMARCA5/SNF2H and BAZ1A/ACF1 interaction. Within the complex, the heterodimer with CHRAC1 interacts with BAZ1A/ACF1; the interactions are direct.

It is found in the nucleus. Its function is as follows. Accessory component of the DNA polymerase epsilon complex. Participates in DNA repair and in chromosomal DNA replication. Forms a complex with CHRAC1 and binds naked DNA, which is then incorporated into chromatin, aided by the nucleosome-remodeling activity of ISWI/SNF2H and ACF1. Does not enhance nucleosome sliding activity of the ACF-5 ISWI chromatin remodeling complex. The protein is DNA polymerase epsilon subunit 3 (POLE3) of Bos taurus (Bovine).